Consider the following 572-residue polypeptide: Proline--tRNA ligase (572 aa).

It belongs to the class-II aminoacyl-tRNA synthetase family. ProS type 1 subfamily. As to quaternary structure, homodimer.

It is found in the cytoplasm. It catalyses the reaction tRNA(Pro) + L-proline + ATP = L-prolyl-tRNA(Pro) + AMP + diphosphate. Catalyzes the attachment of proline to tRNA(Pro) in a two-step reaction: proline is first activated by ATP to form Pro-AMP and then transferred to the acceptor end of tRNA(Pro). As ProRS can inadvertently accommodate and process non-cognate amino acids such as alanine and cysteine, to avoid such errors it has two additional distinct editing activities against alanine. One activity is designated as 'pretransfer' editing and involves the tRNA(Pro)-independent hydrolysis of activated Ala-AMP. The other activity is designated 'posttransfer' editing and involves deacylation of mischarged Ala-tRNA(Pro). The misacylated Cys-tRNA(Pro) is not edited by ProRS. In Escherichia fergusonii (strain ATCC 35469 / DSM 13698 / CCUG 18766 / IAM 14443 / JCM 21226 / LMG 7866 / NBRC 102419 / NCTC 12128 / CDC 0568-73), this protein is Proline--tRNA ligase.